A 77-amino-acid chain; its full sequence is Conotoxin S6.11 (77 aa).

The signal sequence occupies residues 1 to 19; sequence MEKLTILLLVAAVLMSTQA. The propeptide occupies 20–50; it reads LIQGGLDERQKAKSNFFSKRKSNAESWWEGE. 3 disulfide bridges follow: Cys-51–Cys-65, Cys-58–Cys-69, and Cys-64–Cys-74.

This sequence belongs to the conotoxin O2 superfamily. Expressed by the venom duct.

It is found in the secreted. The sequence is that of Conotoxin S6.11 from Conus striatus (Striated cone).